The sequence spans 166 residues: Protein SprT (166 aa).

In terms of domain architecture, SprT-like spans 20-164 (EHLANANRKL…CVRCGDLLVA (145 aa)). His-78 provides a ligand contact to Zn(2+). Glu-79 is an active-site residue. Residue His-82 coordinates Zn(2+).

Belongs to the SprT family. Zn(2+) is required as a cofactor.

It localises to the cytoplasm. The sequence is that of Protein SprT from Klebsiella pneumoniae subsp. pneumoniae (strain ATCC 700721 / MGH 78578).